The following is a 341-amino-acid chain: Phosphoribosylformylglycinamidine cyclo-ligase (341 aa).

It belongs to the AIR synthase family.

The protein localises to the cytoplasm. The enzyme catalyses 2-formamido-N(1)-(5-O-phospho-beta-D-ribosyl)acetamidine + ATP = 5-amino-1-(5-phospho-beta-D-ribosyl)imidazole + ADP + phosphate + H(+). It participates in purine metabolism; IMP biosynthesis via de novo pathway; 5-amino-1-(5-phospho-D-ribosyl)imidazole from N(2)-formyl-N(1)-(5-phospho-D-ribosyl)glycinamide: step 2/2. This Xanthomonas euvesicatoria pv. vesicatoria (strain 85-10) (Xanthomonas campestris pv. vesicatoria) protein is Phosphoribosylformylglycinamidine cyclo-ligase.